Here is a 195-residue protein sequence, read N- to C-terminus: MLSSYSMIRDSWKKLKKSDIYPVQKARMVSWRKSGSVVRLDYPTRLDRARSLGYKAKQGFIIVRSRVRKGGQHRPKIMGGRRPRRLAYNKLTVKKSIQLIAEERAADKYPNMEVLNSYYVGEDGLYKYYEVILIDRSSPAVLSDKNVSWIANSANKGRVYRGLTSAGYKSRGLGHGRLGSAKSRPSIRANGRLRR.

Positions 174 to 195 are disordered; it reads GHGRLGSAKSRPSIRANGRLRR.

It belongs to the eukaryotic ribosomal protein eL15 family.

The polypeptide is Large ribosomal subunit protein eL15 (Picrophilus torridus (strain ATCC 700027 / DSM 9790 / JCM 10055 / NBRC 100828 / KAW 2/3)).